Here is a 455-residue protein sequence, read N- to C-terminus: Phosphoglucosamine mutase (455 aa).

The active-site Phosphoserine intermediate is serine 104. Residues serine 104, aspartate 243, aspartate 245, and aspartate 247 each coordinate Mg(2+). Phosphoserine is present on serine 104.

This sequence belongs to the phosphohexose mutase family. The cofactor is Mg(2+). Post-translationally, activated by phosphorylation.

It carries out the reaction alpha-D-glucosamine 1-phosphate = D-glucosamine 6-phosphate. In terms of biological role, catalyzes the conversion of glucosamine-6-phosphate to glucosamine-1-phosphate. This is Phosphoglucosamine mutase from Synechococcus sp. (strain CC9311).